Consider the following 324-residue polypeptide: Bacilliredoxin reductase Bdr (324 aa).

The residue at position 220 (C220) is an S-bacillithiol cysteine disulfide.

As to quaternary structure, interacts with BrxC. Requires FAD as cofactor. Post-translationally, C-terminal Cys can react with bacillithiol (BSH) to form mixed disulfides. S-bacillithiolation protects Cys residues against overoxidation by acting as a redox switch in response to oxidative stress.

Functionally, S-bacillithiolation is the formation of mixed disulfide bonds between protein thiols and the general thiol reductant bacillithiol (BSH) under oxidative stress. BSH is an equivalent of glutathione (GSH) in Firmicutes. This protein is a NADPH-dependent bacilliredoxin reductase, which debacillithiolates (removes BSH) the S-bacillithiolated BrxB (BrxB-SSB), and to a lesser extent BrxC (BrxC-SSB). Involved in a redox cascade increasing the efficacy of BrxB function by reducing BrxB-SSB and thus reactivating it. Has NADPH-dependent oxidase activity under aerobic conditions producing hydrogen peroxide (H(2)O(2)). The protein is Bacilliredoxin reductase Bdr of Bacillus subtilis (strain 168).